The sequence spans 123 residues: Small ribosomal subunit protein uS12 (123 aa).

Asp89 bears the 3-methylthioaspartic acid mark. The disordered stretch occupies residues 104 to 123 (TAGVKDRKQARSKYGAKRPK). Basic residues predominate over residues 113 to 123 (ARSKYGAKRPK).

It belongs to the universal ribosomal protein uS12 family. Part of the 30S ribosomal subunit. Contacts proteins S8 and S17. May interact with IF1 in the 30S initiation complex.

In terms of biological role, with S4 and S5 plays an important role in translational accuracy. Functionally, interacts with and stabilizes bases of the 16S rRNA that are involved in tRNA selection in the A site and with the mRNA backbone. Located at the interface of the 30S and 50S subunits, it traverses the body of the 30S subunit contacting proteins on the other side and probably holding the rRNA structure together. The combined cluster of proteins S8, S12 and S17 appears to hold together the shoulder and platform of the 30S subunit. The sequence is that of Small ribosomal subunit protein uS12 from Chromobacterium violaceum (strain ATCC 12472 / DSM 30191 / JCM 1249 / CCUG 213 / NBRC 12614 / NCIMB 9131 / NCTC 9757 / MK).